Here is a 269-residue protein sequence, read N- to C-terminus: 4-hydroxy-tetrahydrodipicolinate reductase (269 aa).

NAD(+)-binding positions include 10–15, Glu36, 99–101, and 123–126; these read GANGRM, GTT, and AANF. The Proton donor/acceptor role is filled by His156. His157 lines the (S)-2,3,4,5-tetrahydrodipicolinate pocket. The active-site Proton donor is Lys160. 166-167 serves as a coordination point for (S)-2,3,4,5-tetrahydrodipicolinate; that stretch reads GT.

This sequence belongs to the DapB family.

The protein resides in the cytoplasm. The catalysed reaction is (S)-2,3,4,5-tetrahydrodipicolinate + NAD(+) + H2O = (2S,4S)-4-hydroxy-2,3,4,5-tetrahydrodipicolinate + NADH + H(+). It catalyses the reaction (S)-2,3,4,5-tetrahydrodipicolinate + NADP(+) + H2O = (2S,4S)-4-hydroxy-2,3,4,5-tetrahydrodipicolinate + NADPH + H(+). Its pathway is amino-acid biosynthesis; L-lysine biosynthesis via DAP pathway; (S)-tetrahydrodipicolinate from L-aspartate: step 4/4. In terms of biological role, catalyzes the conversion of 4-hydroxy-tetrahydrodipicolinate (HTPA) to tetrahydrodipicolinate. The protein is 4-hydroxy-tetrahydrodipicolinate reductase of Neisseria meningitidis serogroup C (strain 053442).